The sequence spans 396 residues: Cellular tumor antigen p53 (396 aa).

The transcription activation (acidic) stretch occupies residues 1–44 (MADLAENVSLPLSQESFEDLWKMNLNLVAVQPPETESWVGYDNF). The segment at 63–89 (ATEPAPQPSISTLDTGSPPTSTVPTTS) is disordered. The span at 77–89 (TGSPPTSTVPTTS) shows a compositional bias: low complexity. A DNA-binding region spans residues 90-281 (DYPGALGFQL…KTEEINLKKQ (192 aa)). Zn(2+)-binding residues include Cys164, His167, Cys227, and Cys231. The tract at residues 262-269 (RVCACPGR) is interaction with DNA. A Bipartite nuclear localization signal motif is present at residues 297–317 (KRAMKEASLPAPQPGASKKTK). A disordered region spans residues 301 to 322 (KEASLPAPQPGASKKTKSSPAV). An oligomerization region spans residues 325–356 (DEIYTLQIRGKEKYEMLKKFNDSLELSELVPV). The Nuclear export signal motif lies at 339-350 (EMLKKFNDSLEL). The basic (repression of DNA-binding) stretch occupies residues 369–392 (KRVAKRDFGVGPKKRKKLLVKEEK).

This sequence belongs to the p53 family. Binds DNA as a homotetramer. Requires Zn(2+) as cofactor.

Its subcellular location is the cytoplasm. It localises to the nucleus. Its function is as follows. Multifunctional transcription factor that induces cell cycle arrest, DNA repair or apoptosis upon binding to its target DNA sequence. Acts as a tumor suppressor in many tumor types; induces growth arrest or apoptosis depending on the physiological circumstances and cell type. Negatively regulates cell division by controlling expression of a set of genes required for this process. One of the activated genes is an inhibitor of cyclin-dependent kinases. Apoptosis induction seems to be mediated either by stimulation of BAX and FAS antigen expression, or by repression of Bcl-2 expression. The sequence is that of Cellular tumor antigen p53 (tp53) from Oncorhynchus mykiss (Rainbow trout).